The chain runs to 764 residues: 1,4-alpha-glucan branching enzyme GlgB (764 aa).

Catalysis depends on Asp-431, which acts as the Nucleophile. The Proton donor role is filled by Glu-484.

This sequence belongs to the glycosyl hydrolase 13 family. GlgB subfamily. In terms of assembly, monomer.

It catalyses the reaction Transfers a segment of a (1-&gt;4)-alpha-D-glucan chain to a primary hydroxy group in a similar glucan chain.. The protein operates within glycan biosynthesis; glycogen biosynthesis. Functionally, catalyzes the formation of the alpha-1,6-glucosidic linkages in glycogen by scission of a 1,4-alpha-linked oligosaccharide from growing alpha-1,4-glucan chains and the subsequent attachment of the oligosaccharide to the alpha-1,6 position. The polypeptide is 1,4-alpha-glucan branching enzyme GlgB (Synechococcus sp. (strain CC9902)).